Here is a 188-residue protein sequence, read N- to C-terminus: dCTP deaminase (188 aa).

DCTP contacts are provided by residues 111–116 (KSTYAR), 135–137 (TLE), Gln156, Tyr170, and Gln180. Glu137 functions as the Proton donor/acceptor in the catalytic mechanism.

This sequence belongs to the dCTP deaminase family. As to quaternary structure, homotrimer.

The enzyme catalyses dCTP + H2O + H(+) = dUTP + NH4(+). It functions in the pathway pyrimidine metabolism; dUMP biosynthesis; dUMP from dCTP (dUTP route): step 1/2. Its function is as follows. Catalyzes the deamination of dCTP to dUTP. In Marinobacter nauticus (strain ATCC 700491 / DSM 11845 / VT8) (Marinobacter aquaeolei), this protein is dCTP deaminase.